The primary structure comprises 153 residues: Ribosome maturation factor RimP (153 aa).

It belongs to the RimP family.

It localises to the cytoplasm. Its function is as follows. Required for maturation of 30S ribosomal subunits. The sequence is that of Ribosome maturation factor RimP from Clostridium botulinum (strain Alaska E43 / Type E3).